Consider the following 223-residue polypeptide: Protein BTG4 (223 aa).

This sequence belongs to the BTG family. As to quaternary structure, interacts with CNOT7. Interacts with EIF4E. Interacts with CNOT8. As to expression, expressed in oocytes after germinal vesicle breakdown. Expressed in testis and in olfactory epithelium.

Its function is as follows. Adapter protein that bridges CNOT7, a catalytic subunit of the CCR4-NOT complex, to EIF4E. Facilitates maternal mRNAs decay during the maturation of oocytes and in the fertilized egg, and is required for the maternal-zygotic transition (MZT), zygotic cleavage and initiation of embryonic development. The sequence is that of Protein BTG4 (BTG4) from Homo sapiens (Human).